Consider the following 250-residue polypeptide: Ribosomal RNA-processing protein 15 (250 aa).

Residues 1–27 (MGSKHRVDTKDKKRTRKNAEFGREKRN) show a composition bias toward basic and acidic residues. The disordered stretch occupies residues 1–101 (MGSKHRVDTK…NSKHDDGSTG (101 aa)). 2 stretches are compositionally biased toward acidic residues: residues 43-53 (MEGDEAEEDEQ) and 67-83 (EQSD…EDDD). A Phosphoserine modification is found at Ser69.

It belongs to the RRP15 family.

Its subcellular location is the nucleus. The protein localises to the nucleolus. Functionally, constituent of pre-60S ribosomal particles. Required for large subunit rRNA maturation, in particular processing of the 27S pre-rRNA at the A3 and B1 sites to yield 5.8S and 25S rRNA. The sequence is that of Ribosomal RNA-processing protein 15 from Saccharomyces cerevisiae (strain ATCC 204508 / S288c) (Baker's yeast).